A 222-amino-acid polypeptide reads, in one-letter code: Pectate lyase A (222 aa).

The N-terminal stretch at 1–26 (MKKMLTLLLSAGLVASIFGVMPAAAA) is a signal peptide.

This sequence belongs to the polysaccharide lyase 3 family. The cofactor is Ca(2+).

It localises to the secreted. The enzyme catalyses Eliminative cleavage of (1-&gt;4)-alpha-D-galacturonan to give oligosaccharides with 4-deoxy-alpha-D-galact-4-enuronosyl groups at their non-reducing ends.. It carries out the reaction Eliminative cleavage of (1-&gt;4)-alpha-D-galacturonan methyl ester to give oligosaccharides with 4-deoxy-6-O-methyl-alpha-D-galact-4-enuronosyl groups at their non-reducing ends.. The protein operates within glycan metabolism; pectin degradation. In terms of biological role, catalyzes the depolymerization of both polygalacturonate and pectins with low (20-34%) and high (90%) levels of methyl esterification, with an endo mode of action. In contrast to the majority of pectate lyases, displays high activity on highly methylated pectins. Does not show xylanase and cellulase activity. This chain is Pectate lyase A, found in Paenibacillus amylolyticus.